We begin with the raw amino-acid sequence, 322 residues long: UDP-N-acetylenolpyruvoylglucosamine reductase (322 aa).

An FAD-binding PCMH-type domain is found at 36 to 202 (RAGGPAQVLF…TSVLFEGVPG (167 aa)). The active site involves Arg182. The active-site Proton donor is Ser231. Glu301 is a catalytic residue.

It belongs to the MurB family. FAD serves as cofactor.

The protein resides in the cytoplasm. It catalyses the reaction UDP-N-acetyl-alpha-D-muramate + NADP(+) = UDP-N-acetyl-3-O-(1-carboxyvinyl)-alpha-D-glucosamine + NADPH + H(+). It functions in the pathway cell wall biogenesis; peptidoglycan biosynthesis. Its function is as follows. Cell wall formation. The chain is UDP-N-acetylenolpyruvoylglucosamine reductase from Brucella suis (strain ATCC 23445 / NCTC 10510).